The following is a 266-amino-acid chain: Probable phosphoadenosine phosphosulfate reductase (266 aa).

The disordered stretch occupies residues 219 to 246 (TQPVREGEDERAGRWRGREKTECGLHSH). Basic and acidic residues predominate over residues 223–243 (REGEDERAGRWRGREKTECGL).

This sequence belongs to the PAPS reductase family. CysH subfamily.

The protein localises to the cytoplasm. It localises to the nucleus. The catalysed reaction is [thioredoxin]-disulfide + sulfite + adenosine 3',5'-bisphosphate + 2 H(+) = [thioredoxin]-dithiol + 3'-phosphoadenylyl sulfate. It participates in sulfur metabolism; hydrogen sulfide biosynthesis; sulfite from sulfate: step 3/3. The NADP dependent reduction of PAPS into sulfite involves thioredoxin which probably plays the role of a thiol carrier. Required for methionine synthesis. This chain is Probable phosphoadenosine phosphosulfate reductase (met16), found in Schizosaccharomyces pombe (strain 972 / ATCC 24843) (Fission yeast).